The following is a 156-amino-acid chain: Putative thymidylate kinase (156 aa).

7–14 is an ATP binding site; the sequence is GLDGTGKT.

It belongs to the thymidylate kinase family.

It carries out the reaction dTMP + ATP = dTDP + ADP. The protein operates within pyrimidine metabolism; dTTP biosynthesis. Its function is as follows. Catalyzes the conversion of dTMP to dTDP. The polypeptide is Putative thymidylate kinase (Acidianus convivator (ABV)).